We begin with the raw amino-acid sequence, 251 residues long: Ribosomal RNA small subunit methyltransferase G (251 aa).

S-adenosyl-L-methionine contacts are provided by residues Gly74, Phe79, 125–126 (AE), and Arg144. The disordered stretch occupies residues 224 to 251 (RPAGLPTQHPLGAIEGAPRVESEEPEEP).

It belongs to the methyltransferase superfamily. RNA methyltransferase RsmG family.

It is found in the cytoplasm. Specifically methylates the N7 position of a guanine in 16S rRNA. This Gloeobacter violaceus (strain ATCC 29082 / PCC 7421) protein is Ribosomal RNA small subunit methyltransferase G.